Reading from the N-terminus, the 793-residue chain is Translocase of chloroplast 90, chloroplastic (793 aa).

The segment at 22-59 (LGSDPFFRDPHQEQDNHSQAPAAPQPVTLSEPPCSTSS) is disordered. Residues 27–37 (FFRDPHQEQDN) are compositionally biased toward basic and acidic residues. A coiled-coil region spans residues 130 to 157 (LIRAEESELKNVKLRQDRAKALAREQES). One can recognise an AIG1-type G domain in the interval 164–394 (DFSLRILVLG…FRDSIGLGQP (231 aa)). The G1 stretch occupies residues 173–180 (GKTGVGKS). GTP contacts are provided by residues 176-181 (GVGKSA) and 195-200 (DAFRPG). Ser-180 serves as a coordination point for Mg(2+). Residues 195-198 (DAFR) are homodimerization. A G2 region spans residues 199–203 (PGTDR). Residues 220–223 (DTPG) are G3. Residues 259–264 (RLDMID) form a homodimerization region. The helical transmembrane segment at 279-297 (IFGAAIWLNTILVMTHSAA) threads the bilayer. Positions 293–296 (THSA) are G4. GTP-binding positions include His-294 and 341–342 (EN). Positions 341–343 (ENH) are G5. Coiled-coil stretches lie at residues 410 to 442 (LRRRLSSGADETEKEIDKLLNLDLEEEDEYDQL) and 477 to 503 (KKQLKEECRRRRDEKLVEEENLEDTEQ).

This sequence belongs to the TRAFAC class TrmE-Era-EngA-EngB-Septin-like GTPase superfamily. AIG1/Toc34/Toc159-like paraseptin GTPase family. TOC159 subfamily. Homodimer. Part of the TOC core complex that includes 1 protein for the specific recognition of transit peptides surrounded by a ring composed of four proteins forming translocation channels, and four to five GTP-binding proteins providing energy. This core complex can interact with components of the TIC complex to form a larger import complex. Chloroplastic protein precursor such as prSS (precursor of the RuBisCO small subunit) interacts with these complexes. The TOC complex contains a specific subset of polar lipids such as digalactosyldiacylglyceride (DGDG), phosphatidylcholine (PC) and phosphatidylglycerol (PG). Interacts with TOC33 and TOC75. Mg(2+) is required as a cofactor. In terms of tissue distribution, expressed in seedlings, leaves, flowers, and roots.

It is found in the plastid. It localises to the chloroplast outer membrane. Its subcellular location is the cytoplasm. Its function is as follows. GTPase involved in protein precursor import into chloroplasts. Seems to recognize chloroplast-destined precursor proteins and regulate their presentation to the translocation channel through GTP hydrolysis. Probably specialized in the import of nuclear encoded photosynthetic preproteins from the cytoplasm to the chloroplast. The sequence is that of Translocase of chloroplast 90, chloroplastic (TOC90) from Arabidopsis thaliana (Mouse-ear cress).